A 241-amino-acid polypeptide reads, in one-letter code: MKILLVFDFDNTIIDDNSDTWIVQCAPEKKLPLELKDSYKKGFWTEFMGRVFKYLGDEGVREDEMKRAMISMPFTPGMVELLNFIRKNKNKFDCIIISDSNSVFIDWVLEATNFHDVFDKVFTNPAAFDSNGHLTVEKHHTHSCTRCPQNLCKNVVLVEFVGEQLQQGVNYTRIVYIGDGGNDVCPVTFLKKNDIAMPRKGYALQKTLYRMCQNLEPMESSVVSWSSGVEIISYLQFLIKE.

D8 (nucleophile) is an active-site residue. Mg(2+) contacts are provided by D8 and D10. Residue D10 is the Proton donor of the active site. D19 and D99 together coordinate substrate. Mg(2+) is bound at residue D179.

The protein belongs to the HAD-like hydrolase superfamily. PHOSPHO family. Mg(2+) serves as cofactor.

The enzyme catalyses pyridoxal 5'-phosphate + H2O = pyridoxal + phosphate. Phosphatase that has high activity toward pyridoxal 5'-phosphate (PLP). Also active at much lower level toward pyrophosphate, phosphoethanolamine (PEA), phosphocholine (PCho), phospho-l-tyrosine, fructose-6-phosphate, p-nitrophenyl phosphate, and h-glycerophosphate. This chain is Pyridoxal phosphate phosphatase PHOSPHO2 (PHOSPHO2), found in Bos taurus (Bovine).